Here is a 60-residue protein sequence, read N- to C-terminus: Large ribosomal subunit protein uL30 (60 aa).

This sequence belongs to the universal ribosomal protein uL30 family. Part of the 50S ribosomal subunit.

The sequence is that of Large ribosomal subunit protein uL30 from Streptococcus suis (strain 98HAH33).